Reading from the N-terminus, the 453-residue chain is Pup--protein ligase (453 aa).

Residue E9 participates in Mg(2+) binding. An ATP-binding site is contributed by R53. Y55 is a binding site for Mg(2+). Catalysis depends on D57, which acts as the Proton acceptor. A Mg(2+)-binding site is contributed by E63. ATP-binding residues include T66 and W420.

This sequence belongs to the Pup ligase/Pup deamidase family. Pup-conjugating enzyme subfamily.

It carries out the reaction ATP + [prokaryotic ubiquitin-like protein]-L-glutamate + [protein]-L-lysine = ADP + phosphate + N(6)-([prokaryotic ubiquitin-like protein]-gamma-L-glutamyl)-[protein]-L-lysine.. It participates in protein degradation; proteasomal Pup-dependent pathway. The protein operates within protein modification; protein pupylation. Functionally, catalyzes the covalent attachment of the prokaryotic ubiquitin-like protein modifier Pup to the proteasomal substrate proteins, thereby targeting them for proteasomal degradation. This tagging system is termed pupylation. The ligation reaction involves the side-chain carboxylate of the C-terminal glutamate of Pup and the side-chain amino group of a substrate lysine. The sequence is that of Pup--protein ligase from Streptomyces avermitilis (strain ATCC 31267 / DSM 46492 / JCM 5070 / NBRC 14893 / NCIMB 12804 / NRRL 8165 / MA-4680).